Consider the following 626-residue polypeptide: Colicin-Ia (626 aa).

Residues 23-225 (EIMAVDIYVN…TRLSELEKNG (203 aa)) are translocation (T). Positions 276–286 (QQLTQQKNTPD) are enriched in polar residues. The segment at 276-308 (QQLTQQKNTPDGKTIVSPEKFPGRSSTNHSIVV) is disordered. The interval 282-385 (KNTPDGKTIV…LRQRLLDARN (104 aa)) is receptor-binding (R). The segment at 450-626 (KDAINFTTEF…VEKANKFWGI (177 aa)) is channel (C). The next 2 helical transmembrane spans lie at 580 to 594 (ATAL…LTGS) and 597 to 612 (GIIG…GALI).

The protein belongs to the channel forming colicin family.

Its subcellular location is the cell membrane. This colicin is a channel-forming colicin. This class of transmembrane toxins depolarize the cytoplasmic membrane, leading to dissipation of cellular energy. In terms of biological role, colicins are polypeptide toxins produced by and active against E.coli and closely related bacteria. The protein is Colicin-Ia (cia) of Escherichia coli.